The sequence spans 345 residues: NADPH dehydrogenase (345 aa).

Residue 23–26 (SPMC) participates in FMN binding. Tyr28 contacts substrate. FMN is bound by residues Ala60 and Gln102. A substrate-binding site is contributed by 164–167 (HGAH). FMN-binding positions include Arg215 and 307-308 (GR).

Belongs to the NADH:flavin oxidoreductase/NADH oxidase family. NamA subfamily. As to quaternary structure, homotetramer. Requires FMN as cofactor.

The enzyme catalyses A + NADPH + H(+) = AH2 + NADP(+). Functionally, catalyzes the reduction of the double bond of an array of alpha,beta-unsaturated aldehydes and ketones. It also reduces the nitro group of nitroester and nitroaromatic compounds. It could have a role in detoxification processes. In Bacillus cereus (strain G9842), this protein is NADPH dehydrogenase.